The sequence spans 405 residues: Tryptophan synthase beta chain (405 aa).

Lysine 95 bears the N6-(pyridoxal phosphate)lysine mark.

The protein belongs to the TrpB family. As to quaternary structure, tetramer of two alpha and two beta chains. Requires pyridoxal 5'-phosphate as cofactor.

The catalysed reaction is (1S,2R)-1-C-(indol-3-yl)glycerol 3-phosphate + L-serine = D-glyceraldehyde 3-phosphate + L-tryptophan + H2O. Its pathway is amino-acid biosynthesis; L-tryptophan biosynthesis; L-tryptophan from chorismate: step 5/5. Its function is as follows. The beta subunit is responsible for the synthesis of L-tryptophan from indole and L-serine. The polypeptide is Tryptophan synthase beta chain (Pseudomonas putida (strain ATCC 700007 / DSM 6899 / JCM 31910 / BCRC 17059 / LMG 24140 / F1)).